The following is a 464-amino-acid chain: Cysteine--tRNA ligase (464 aa).

Cysteine 27 lines the Zn(2+) pocket. Residues 29–39 carry the 'HIGH' region motif; that stretch reads PTVYDDAHLGH. Residues cysteine 203, histidine 234, and glutamate 238 each contribute to the Zn(2+) site. Positions 266-270 match the 'KMSKS' region motif; sequence KMSKS. Lysine 269 contacts ATP.

The protein belongs to the class-I aminoacyl-tRNA synthetase family. As to quaternary structure, monomer. Zn(2+) is required as a cofactor.

It localises to the cytoplasm. It catalyses the reaction tRNA(Cys) + L-cysteine + ATP = L-cysteinyl-tRNA(Cys) + AMP + diphosphate. This chain is Cysteine--tRNA ligase, found in Campylobacter concisus (strain 13826).